A 772-amino-acid chain; its full sequence is UDP-N-acetylmuramoyl-L-alanyl-D-glutamate--2,6-diaminopimelate ligase MurE homolog, chloroplastic (772 aa).

The N-terminal 40 residues, 1 to 40 (MAFTFLSPHPVFLSLTGTTSSFSYKPVLLPFSRNSRTLTV), are a transit peptide targeting the chloroplast. Disordered stretches follow at residues 42–87 (AGPA…KLEE) and 141–168 (LLKP…DVTD). Acidic residues-rich tracts occupy residues 54-63 (ADDDPPEAPE) and 158-168 (EGNEEEGDVTD). At Ser-194 the chain carries Phosphoserine.

It belongs to the MurCDEF family. MurE subfamily. In terms of assembly, component of the plastid-encoded plastid RNA polymerase (PEP) complex. As to expression, expressed in leaves and flowers.

Its subcellular location is the plastid. The protein resides in the chloroplast. Functionally, involved in chloroplast biogenesis. Required for thylakoid membrane development. Seems to be required for plastid-encoded plastid RNA polymerase (PEP)-dependent gene expression. The sequence is that of UDP-N-acetylmuramoyl-L-alanyl-D-glutamate--2,6-diaminopimelate ligase MurE homolog, chloroplastic from Arabidopsis thaliana (Mouse-ear cress).